Consider the following 324-residue polypeptide: Tubulin alpha-8 chain (324 aa).

6 residues coordinate GTP: S15, G19, T20, T54, N81, and N103. E129 is an active-site residue.

The protein belongs to the tubulin family. In terms of assembly, dimer of alpha and beta chains. A typical microtubule is a hollow water-filled tube with an outer diameter of 25 nm and an inner diameter of 15 nM. Alpha-beta heterodimers associate head-to-tail to form protofilaments running lengthwise along the microtubule wall with the beta-tubulin subunit facing the microtubule plus end conferring a structural polarity. Microtubules usually have 13 protofilaments but different protofilament numbers can be found in some organisms and specialized cells. Mg(2+) is required as a cofactor. In terms of processing, some glutamate residues at the C-terminus are polyglycylated, resulting in polyglycine chains on the gamma-carboxyl group. Glycylation is mainly limited to tubulin incorporated into axonemes (cilia and flagella) whereas glutamylation is prevalent in neuronal cells, centrioles, axonemes, and the mitotic spindle. Both modifications can coexist on the same protein on adjacent residues, and lowering polyglycylation levels increases polyglutamylation, and reciprocally. The precise function of polyglycylation is still unclear. Post-translationally, some glutamate residues at the C-terminus are polyglutamylated, resulting in polyglutamate chains on the gamma-carboxyl group. Polyglutamylation plays a key role in microtubule severing by spastin (SPAST). SPAST preferentially recognizes and acts on microtubules decorated with short polyglutamate tails: severing activity by SPAST increases as the number of glutamates per tubulin rises from one to eight, but decreases beyond this glutamylation threshold.

The protein localises to the cytoplasm. Its subcellular location is the cytoskeleton. The catalysed reaction is GTP + H2O = GDP + phosphate + H(+). In terms of biological role, tubulin is the major constituent of microtubules, a cylinder consisting of laterally associated linear protofilaments composed of alpha- and beta-tubulin heterodimers. Microtubules grow by the addition of GTP-tubulin dimers to the microtubule end, where a stabilizing cap forms. Below the cap, tubulin dimers are in GDP-bound state, owing to GTPase activity of alpha-tubulin. This chain is Tubulin alpha-8 chain, found in Gallus gallus (Chicken).